The primary structure comprises 194 residues: GTP cyclohydrolase 1 (194 aa).

Positions 85, 88, and 156 each coordinate Zn(2+).

Belongs to the GTP cyclohydrolase I family. Toroid-shaped homodecamer, composed of two pentamers of five dimers.

The enzyme catalyses GTP + H2O = 7,8-dihydroneopterin 3'-triphosphate + formate + H(+). The protein operates within cofactor biosynthesis; 7,8-dihydroneopterin triphosphate biosynthesis; 7,8-dihydroneopterin triphosphate from GTP: step 1/1. This is GTP cyclohydrolase 1 from Bacteroides fragilis (strain YCH46).